The sequence spans 160 residues: UPF0178 protein PA14_69280 (160 aa).

It belongs to the UPF0178 family.

This Pseudomonas aeruginosa (strain UCBPP-PA14) protein is UPF0178 protein PA14_69280.